The following is a 572-amino-acid chain: Probable terpene synthase 13 (572 aa).

Residues D326, D330, and E478 each contribute to the Mg(2+) site. The DDXXD motif motif lies at 326-330 (DDIFD).

It belongs to the terpene synthase family. Mg(2+) is required as a cofactor.

In terms of biological role, probable sesquiterpene synthase. This Ricinus communis (Castor bean) protein is Probable terpene synthase 13 (TPS13).